A 305-amino-acid polypeptide reads, in one-letter code: tRNA dimethylallyltransferase (305 aa).

8 to 15 (GPTAVGKT) contacts ATP. Substrate is bound at residue 10–15 (TAVGKT). The segment at 33 to 36 (DSRQ) is interaction with substrate tRNA.

The protein belongs to the IPP transferase family. As to quaternary structure, monomer. The cofactor is Mg(2+).

It catalyses the reaction adenosine(37) in tRNA + dimethylallyl diphosphate = N(6)-dimethylallyladenosine(37) in tRNA + diphosphate. In terms of biological role, catalyzes the transfer of a dimethylallyl group onto the adenine at position 37 in tRNAs that read codons beginning with uridine, leading to the formation of N6-(dimethylallyl)adenosine (i(6)A). The sequence is that of tRNA dimethylallyltransferase from Thermotoga sp. (strain RQ2).